A 354-amino-acid polypeptide reads, in one-letter code: UDP-glucose 4-epimerase GEPI42 (354 aa).

Residue 11–42 (TILVTGGAGFIGSHTVVQLLKQGFHVSIIDNL) coordinates NAD(+). A substrate-binding site is contributed by Ser-137. Tyr-161 functions as the Proton acceptor in the catalytic mechanism.

The protein belongs to the NAD(P)-dependent epimerase/dehydratase family. Requires NAD(+) as cofactor.

It catalyses the reaction UDP-alpha-D-glucose = UDP-alpha-D-galactose. It participates in carbohydrate metabolism; galactose metabolism. In Cyamopsis tetragonoloba (Guar), this protein is UDP-glucose 4-epimerase GEPI42.